Consider the following 123-residue polypeptide: Putative EG45-like domain containing protein 1 (123 aa).

A signal peptide spans 1–21 (MSKSIVFFSTVLVFLFSFSYA). The 100-residue stretch at 24–123 (GIATFYTSYT…AGIINIDYFP (100 aa)) folds into the Expansin-like EG45 domain.

The protein resides in the secreted. Its function is as follows. Might have a systemic role in water and solute homeostasis. In Arabidopsis thaliana (Mouse-ear cress), this protein is Putative EG45-like domain containing protein 1 (EGC1).